The primary structure comprises 205 residues: MCKGLAGLPASCLRSAKDMKHRLGFLLQKSDSCEHNSSHNKKDKVVICQRVSQEEVKKWAESLENLISHECGLAAFKAFLKSEYSEENIDFWISCEEYKKIKSPSKLSPKAKKIYNEFISVQATKEVNLDSCTREETSRNMLEPTITCFDEAQKKIFNLMEKDSYRRFLKSRFYLDLVNPSSCGAEKQKGAKSSADCASLVPQCA.

S-palmitoyl cysteine attachment occurs at residues cysteine 2, cysteine 12, and cysteine 95. The region spanning 62-178 is the RGS domain; that stretch reads SLENLISHEC…LKSRFYLDLV (117 aa).

In terms of processing, palmitoylated on Cys-2 and/or Cys-12. Post-translationally, phosphorylated by cyclic GMP-dependent protein kinase. In terms of tissue distribution, expressed in brain and heart. Expressed in brain at protein level. Expressed in prefontal and visual cortex. Isoform 4 and isoform 5 are expressed ubiquitously. Isoform 1, isoform 2 and isoform 3 are not expressed in the cerebellum.

Functionally, inhibits signal transduction by increasing the GTPase activity of G protein alpha subunits thereby driving them into their inactive GDP-bound form. Activity on G(z)-alpha is inhibited by phosphorylation of the G-protein. Activity on G(z)-alpha and G(i)-alpha-1 is inhibited by palmitoylation of the G-protein. This is Regulator of G-protein signaling 4 (RGS4) from Homo sapiens (Human).